The sequence spans 440 residues: Elongation factor 1-alpha (440 aa).

One can recognise a tr-type G domain in the interval 5–228 (KPHINLVVIG…ALDTYIQPPK (224 aa)). Residues 14 to 21 (GHVDHGKS) form a G1 region. 14–21 (GHVDHGKS) is a GTP binding site. S21 contacts Mg(2+). The G2 stretch occupies residues 70 to 74 (GVTID). The segment at 91 to 94 (DAPG) is G3. GTP is bound by residues 91–95 (DAPGH) and 153–156 (NKMD). The interval 153 to 156 (NKMD) is G4. Residues 194–196 (SAW) are G5.

The protein belongs to the TRAFAC class translation factor GTPase superfamily. Classic translation factor GTPase family. EF-Tu/EF-1A subfamily.

The protein localises to the cytoplasm. It carries out the reaction GTP + H2O = GDP + phosphate + H(+). Functionally, GTP hydrolase that promotes the GTP-dependent binding of aminoacyl-tRNA to the A-site of ribosomes during protein biosynthesis. The protein is Elongation factor 1-alpha of Hyperthermus butylicus (strain DSM 5456 / JCM 9403 / PLM1-5).